Here is a 578-residue protein sequence, read N- to C-terminus: Protein O-linked-mannose beta-1,4-N-acetylglucosaminyltransferase 2 (578 aa).

Over 1 to 4 (MNIS) the chain is Cytoplasmic. Residues 5-25 (AVFSALLVSIMAAVLWKHVKL) form a helical; Signal-anchor for type II membrane protein membrane-spanning segment. The Lumenal segment spans residues 26–578 (LDQFYVIEEE…PFAEVLVCST (553 aa)). Asn98, Asn275, Asn335, Asn451, Asn541, and Asn563 each carry an N-linked (GlcNAc...) asparagine glycan. The Fibronectin type-III domain maps to 484-578 (RESKCQASAQ…PFAEVLVCST (95 aa)).

Belongs to the glycosyltransferase 61 family.

It localises to the endoplasmic reticulum membrane. The catalysed reaction is 3-O-(alpha-D-mannosyl)-L-threonyl-[protein] + UDP-N-acetyl-alpha-D-glucosamine = 3-O-(N-acetyl-beta-D-glucosaminyl-(1-&gt;4)-alpha-D-mannosyl)-L-threonyl-[protein] + UDP + H(+). It functions in the pathway protein modification; protein glycosylation. In terms of biological role, O-linked mannose beta-1,4-N-acetylglucosaminyltransferase that transfers UDP-N-acetyl-D-glucosamine to the 4-position of the mannose to generate N-acetyl-D-glucosamine-beta-1,4-O-D-mannosylprotein. Involved in the biosynthesis of the phosphorylated O-mannosyl trisaccharide (N-acetylgalactosamine-beta-3-N-acetylglucosamine-beta-4-(phosphate-6-)mannose), a carbohydrate structure present in alpha-dystroglycan (DAG1), which is required for binding laminin G-like domain-containing extracellular proteins with high affinity. The polypeptide is Protein O-linked-mannose beta-1,4-N-acetylglucosaminyltransferase 2 (pomgnt2) (Xenopus laevis (African clawed frog)).